Reading from the N-terminus, the 312-residue chain is DnaJ homolog subfamily B member 7 (312 aa).

The J domain occupies 3 to 69 (DYYEVLGVQR…EKRDIYDKYG (67 aa)). A disordered region spans residues 272–312 (SWVTNKKEPSIFSAGFKEGGRRKKKKHKEGQKKKKSNKRNH). Basic residues predominate over residues 291 to 312 (GRRKKKKHKEGQKKKKSNKRNH).

Functionally, probably acts as a co-chaperone. The chain is DnaJ homolog subfamily B member 7 (Dnajb7) from Mus musculus (Mouse).